The sequence spans 250 residues: PF03932 family protein CutC (250 aa).

It belongs to the CutC family.

Its subcellular location is the cytoplasm. The chain is PF03932 family protein CutC from Proteus mirabilis (strain HI4320).